The primary structure comprises 210 residues: Mediator of RNA polymerase II transcription subunit 20 (210 aa).

The protein belongs to the Mediator complex subunit 20 family. In terms of assembly, component of the Mediator complex, which is composed of at least 21 subunits that form three structurally distinct submodules. The Mediator head module contains MED6, MED8, MED11, SRB4/MED17, SRB5/MED18, ROX3/MED19, SRB2/MED20 and SRB6/MED22, the middle module contains MED1, MED4, NUT1/MED5, MED7, CSE2/MED9, NUT2/MED10, SRB7/MED21 and SOH1/MED31, and the tail module contains MED2, PGD1/MED3, RGR1/MED14, GAL11/MED15 and SIN4/MED16. The head and the middle modules interact directly with RNA polymerase II, whereas the elongated tail module interacts with gene-specific regulatory proteins. MED1 interacts directly with MED4 and MED7. SRB2/MED20 interacts directly with SRB4/MED17 and SRB5/MED18.

The protein localises to the nucleus. Component of the Mediator complex, a coactivator involved in the regulated transcription of nearly all RNA polymerase II-dependent genes. Mediator functions as a bridge to convey information from gene-specific regulatory proteins to the basal RNA polymerase II transcription machinery. The Mediator complex, having a compact conformation in its free form, is recruited to promoters by direct interactions with regulatory proteins and serves for the assembly of a functional preinitiation complex with RNA polymerase II and the general transcription factors. The Mediator complex unfolds to an extended conformation and partially surrounds RNA polymerase II, specifically interacting with the unphosphorylated form of the C-terminal domain (CTD) of RNA polymerase II. The Mediator complex dissociates from the RNA polymerase II holoenzyme and stays at the promoter when transcriptional elongation begins. The chain is Mediator of RNA polymerase II transcription subunit 20 (SRB2) from Saccharomyces cerevisiae (strain ATCC 204508 / S288c) (Baker's yeast).